Reading from the N-terminus, the 303-residue chain is Probable cell division protein WhiA (303 aa).

The H-T-H motif DNA-binding region spans 272–303 (SIQQIADSLAVPLTKSGVNHRLRKINKIAEDL).

It belongs to the WhiA family.

In terms of biological role, involved in cell division and chromosome segregation. This Streptococcus mutans serotype c (strain ATCC 700610 / UA159) protein is Probable cell division protein WhiA.